The primary structure comprises 331 residues: Pantothenate kinase (331 aa).

109–116 (GSVAVGKS) is an ATP binding site.

Belongs to the prokaryotic pantothenate kinase family.

The protein resides in the cytoplasm. The catalysed reaction is (R)-pantothenate + ATP = (R)-4'-phosphopantothenate + ADP + H(+). Its pathway is cofactor biosynthesis; coenzyme A biosynthesis; CoA from (R)-pantothenate: step 1/5. The protein is Pantothenate kinase of Rhizobium meliloti (strain 1021) (Ensifer meliloti).